The chain runs to 295 residues: UDP-N-acetylenolpyruvoylglucosamine reductase (295 aa).

The 165-residue stretch at 24–188 (KVGGNAEIFF…LKVVFKINKG (165 aa)) folds into the FAD-binding PCMH-type domain. The active site involves Arg168. The active-site Proton donor is Ser217. The active site involves Glu287.

This sequence belongs to the MurB family. Requires FAD as cofactor.

It is found in the cytoplasm. It catalyses the reaction UDP-N-acetyl-alpha-D-muramate + NADP(+) = UDP-N-acetyl-3-O-(1-carboxyvinyl)-alpha-D-glucosamine + NADPH + H(+). Its pathway is cell wall biogenesis; peptidoglycan biosynthesis. Its function is as follows. Cell wall formation. This Rickettsia peacockii (strain Rustic) protein is UDP-N-acetylenolpyruvoylglucosamine reductase.